We begin with the raw amino-acid sequence, 345 residues long: Fe(3+) ions import ATP-binding protein FbpC (345 aa).

An ABC transporter domain is found at 4-236 (LELHGIGKSY…PVDEPTASFL (233 aa)). 36 to 43 (GPSGSGKT) contacts ATP.

This sequence belongs to the ABC transporter superfamily. Fe(3+) ion importer (TC 3.A.1.10) family. The complex is composed of two ATP-binding proteins (FbpC), two transmembrane proteins (FbpB) and a solute-binding protein (FbpA).

It is found in the cell inner membrane. It catalyses the reaction Fe(3+)(out) + ATP + H2O = Fe(3+)(in) + ADP + phosphate + H(+). Functionally, part of the ABC transporter complex FbpABC involved in Fe(3+) ions import. Responsible for energy coupling to the transport system. This chain is Fe(3+) ions import ATP-binding protein FbpC, found in Serratia marcescens.